Reading from the N-terminus, the 336-residue chain is Dihydroorotate dehydrogenase (quinone) (336 aa).

Residues 62-66 (AGLDK) and Thr86 contribute to the FMN site. Lys66 contributes to the substrate binding site. 111-115 (NRMGF) contacts substrate. FMN contacts are provided by Asn139 and Asn172. Asn172 serves as a coordination point for substrate. Ser175 acts as the Nucleophile in catalysis. Substrate is bound at residue Asn177. FMN-binding residues include Lys217 and Thr245. 246-247 (NT) contacts substrate. FMN-binding positions include Gly268, Gly297, and 318 to 319 (YS).

Belongs to the dihydroorotate dehydrogenase family. Type 2 subfamily. As to quaternary structure, monomer. It depends on FMN as a cofactor.

It localises to the cell membrane. The catalysed reaction is (S)-dihydroorotate + a quinone = orotate + a quinol. It participates in pyrimidine metabolism; UMP biosynthesis via de novo pathway; orotate from (S)-dihydroorotate (quinone route): step 1/1. In terms of biological role, catalyzes the conversion of dihydroorotate to orotate with quinone as electron acceptor. This chain is Dihydroorotate dehydrogenase (quinone), found in Hamiltonella defensa subsp. Acyrthosiphon pisum (strain 5AT).